Consider the following 424-residue polypeptide: Glutamate-1-semialdehyde 2,1-aminomutase (424 aa).

Residue Lys268 is modified to N6-(pyridoxal phosphate)lysine.

It belongs to the class-III pyridoxal-phosphate-dependent aminotransferase family. HemL subfamily. Pyridoxal 5'-phosphate is required as a cofactor.

The protein localises to the cytoplasm. The enzyme catalyses (S)-4-amino-5-oxopentanoate = 5-aminolevulinate. The protein operates within porphyrin-containing compound metabolism; protoporphyrin-IX biosynthesis; 5-aminolevulinate from L-glutamyl-tRNA(Glu): step 2/2. This is Glutamate-1-semialdehyde 2,1-aminomutase from Methanosarcina acetivorans (strain ATCC 35395 / DSM 2834 / JCM 12185 / C2A).